The sequence spans 951 residues: Kinase suppressor of Ras 2 (951 aa).

Residues 237–298 are disordered; that stretch reads PPPPPLESGH…PGTPPPSSRK (62 aa). Residues 260–274 are compositionally biased toward low complexity; that stretch reads RTPPRTPNIVTTVTP. 2 positions are modified to phosphothreonine: Thr-273 and Thr-277. Residues 413 to 457 form a Phorbol-ester/DAG-type zinc finger; that stretch reads KHRFSTKYWMSQTCTVCGKGMLFGLKCKNCKLKCHNKCTKEAPPC. Positions 414, 426, 429, 439, 442, 447, 450, and 457 each coordinate Zn(2+). Ser-475 is modified (phosphoserine; by MARK3). Disordered stretches follow at residues 489–559 and 614–634; these read RYSD…QKKN and EPTSENEESHNEAEESEDEFE. The span at 494-503 shows a compositional bias: polar residues; that stretch reads HISQTLPKTN. At Thr-498 the chain carries Phosphothreonine. Positions 518–531 are enriched in low complexity; it reads SSSNPSSTTSSTPS. Residues 532 to 552 show a composition bias toward pro residues; sequence SPAPPLPPSATPPSPLHPSPQ. A Protein kinase domain is found at 667–932; that stretch reads LEIGELIGKG…TKLMDMLEKL (266 aa). 673–681 serves as a coordination point for ATP; sequence IGKGRFGQV. The active-site Proton donor/acceptor is the Asp-787. ATP-binding residues include Lys-789 and Asp-804.

The protein belongs to the protein kinase superfamily. TKL Ser/Thr protein kinase family. As to quaternary structure, heterodimerizes (via N-terminus) with BRAF (via N-terminus) in a MAP2K1/MEK1-dependent manner. Interacts with BRAF; this increases the low intrinsic protein kinase activity of KSR2. Interacts with MAP2K1, forming a heterodimer that can dimerize to form a heterotetramer. Interacts with MAP3K8, MAPK, RAS and RAF. Post-translationally, phosphorylated on Ser-475 by MARK3.

It localises to the cytoplasm. The protein resides in the membrane. The catalysed reaction is L-seryl-[protein] + ATP = O-phospho-L-seryl-[protein] + ADP + H(+). The enzyme catalyses L-threonyl-[protein] + ATP = O-phospho-L-threonyl-[protein] + ADP + H(+). In terms of biological role, location-regulated scaffold connecting MEK to RAF. Has very low protein kinase activity and can phosphorylate MAP2K1 at several Ser and Thr residues with very low efficiency (in vitro). Acts as MAP2K1/MEK1-dependent allosteric activator of BRAF; upon binding to MAP2K1/MEK1, dimerizes with BRAF and promotes BRAF-mediated phosphorylation of MAP2K1/MEK1. Interaction with BRAF enhances KSR2-mediated phosphorylation of MAP2K1 (in vitro). Blocks MAP3K8 kinase activity and MAP3K8-mediated signaling. Acts as a negative regulator of MAP3K3-mediated activation of ERK, JNK and NF-kappa-B pathways, inhibiting MAP3K3-mediated interleukin-8 production. The sequence is that of Kinase suppressor of Ras 2 from Mus musculus (Mouse).